The following is a 905-amino-acid chain: Lateral signaling target protein 2 homolog (905 aa).

K87 is covalently cross-linked (Glycyl lysine isopeptide (Lys-Gly) (interchain with G-Cter in ubiquitin)). S334 bears the Phosphoserine mark. Positions 354 to 441 (DEMSSLLSPP…RGQDGQSGEV (88 aa)) are disordered. Composition is skewed to polar residues over residues 358–367 (SLLSPPSACQ) and 418–437 (PGNT…QDGQ). Residue T512 is modified to Phosphothreonine. 2 disordered regions span residues 516–552 (NPKS…DNSH) and 589–691 (PGSV…RGDV). Composition is skewed to basic and acidic residues over residues 542 to 552 (PRAEGTGDNSH) and 605 to 615 (GGDKEPERIDE). Residues 647 to 656 (SGPQVDTASR) show a composition bias toward polar residues. Positions 659 to 678 (GEGEVKGQPEPEARKQDPEK) are enriched in basic and acidic residues. The FYVE-type zinc finger occupies 835-895 (DEACGFCTSC…VCTHCYMFHV (61 aa)). Residues C841, C844, C857, C860, C865, C868, and C887 each contribute to the Zn(2+) site. T888 is modified (phosphothreonine; by MAP2K). C890 is a Zn(2+) binding site.

This sequence belongs to the lst-2 family. Interacts with TRIM3. Monoubiquitination at Lys-87 prevents binding to phosphatidylinositol 3-phosphate (PI3P) and localization to early endosome membranes. In terms of tissue distribution, enriched in brain (at protein level).

It localises to the cytoplasm. Its subcellular location is the cytosol. The protein localises to the early endosome membrane. Functionally, negative regulator of epidermal growth factor receptor (EGFR) signaling. Acts by promoting EGFR degradation in endosomes when not monoubiquitinated. This is Lateral signaling target protein 2 homolog (Zfyve28) from Mus musculus (Mouse).